The following is a 219-amino-acid chain: MSSALAVRRVGILGGTFDPVHIGHLRSALEVAEFMRLDELRLLPNARPPHRDTPQVSAQDRLAMVRDAVAGVGGLSVDDRELARDKPSYTIDTLESIRAELNTHDQLFLVLGWDAFCGLPSWHRWEELLQHCHILVLQRPDADVEPPDELRNLLAARSESDPTAMSGPAGHISFVWQTPLAVSATQIRQLLASGKSARFLVPDAVLAYIEAHDLYRASN.

The protein belongs to the NadD family.

The catalysed reaction is nicotinate beta-D-ribonucleotide + ATP + H(+) = deamido-NAD(+) + diphosphate. Its pathway is cofactor biosynthesis; NAD(+) biosynthesis; deamido-NAD(+) from nicotinate D-ribonucleotide: step 1/1. Functionally, catalyzes the reversible adenylation of nicotinate mononucleotide (NaMN) to nicotinic acid adenine dinucleotide (NaAD). In Pseudomonas entomophila (strain L48), this protein is Probable nicotinate-nucleotide adenylyltransferase.